The chain runs to 412 residues: uncharacterized protein (412 aa).

The protein belongs to the PQQ oxidoreductase GdhB family. It depends on pyrroloquinoline quinone as a cofactor.

This is an uncharacterized protein from Synechocystis sp. (strain ATCC 27184 / PCC 6803 / Kazusa).